Consider the following 204-residue polypeptide: Putative glutathione S-transferase alpha-3 (204 aa).

At Thr2 the chain carries N-acetylthreonine. The 78-residue stretch at 2-79 folds into the GST N-terminal domain; sequence TKPQLSYFKV…YIASQHDFVG (78 aa). Residues Tyr8, 49-50, and 63-64 each bind glutathione; these read QL and QS. Positions 81–202 constitute a GST C-terminal domain; sequence TPEEKALVDE…YLKNRPITER (122 aa).

The protein belongs to the GST superfamily. Alpha family.

It carries out the reaction RX + glutathione = an S-substituted glutathione + a halide anion + H(+). In terms of biological role, conjugation of reduced glutathione to a wide number of exogenous and endogenous hydrophobic electrophiles. In Dictyostelium discoideum (Social amoeba), this protein is Putative glutathione S-transferase alpha-3 (gsta3).